Reading from the N-terminus, the 106-residue chain is UPF0145 protein Dhaf_3855 (106 aa).

This sequence belongs to the UPF0145 family.

The polypeptide is UPF0145 protein Dhaf_3855 (Desulfitobacterium hafniense (strain DSM 10664 / DCB-2)).